Here is an 817-residue protein sequence, read N- to C-terminus: LisH domain-containing protein ARMC9 (817 aa).

A LisH domain is found at 7–39; it reads HESELLGLVKEYLDFAEFEDTLKTFSKECKVKG. The stretch at 204–230 forms a coiled coil; that stretch reads GPNSKELLQQLHQQLVEAERRAMTYLK. Phosphoserine is present on S583. Disordered stretches follow at residues 637–659 and 761–817; these read RKGPASVQWSGDEPLRRPVTPGG and CKPQ…SIRK. A compositionally biased stretch (polar residues) spans 765–774; the sequence is VPSTPETVEQ. The span at 793–807 shows a compositional bias: low complexity; that stretch reads PQQASRPASTASSTR. Over residues 808 to 817 the composition is skewed to polar residues; it reads GLHSSQSIRK.

As to quaternary structure, interacts with TOGARAM1, CCDC66, CEP104, CSPP1 and CEP290. Interacts with NDUFAF2.

It is found in the cytoplasm. It localises to the cytoskeleton. Its subcellular location is the cilium basal body. The protein localises to the cell projection. The protein resides in the cilium. It is found in the microtubule organizing center. It localises to the centrosome. Its subcellular location is the centriole. Functionally, involved in ciliogenesis. It is required for appropriate acetylation and polyglutamylation of ciliary microtubules, and regulation of cilium length. Acts as a positive regulator of hedgehog (Hh) signaling. May participate in the trafficking and/or retention of GLI2 and GLI3 proteins at the ciliary tip. The sequence is that of LisH domain-containing protein ARMC9 from Mus musculus (Mouse).